Here is a 119-residue protein sequence, read N- to C-terminus: Ribonuclease P protein component (119 aa).

The protein belongs to the RnpA family. As to quaternary structure, consists of a catalytic RNA component (M1 or rnpB) and a protein subunit.

The catalysed reaction is Endonucleolytic cleavage of RNA, removing 5'-extranucleotides from tRNA precursor.. RNaseP catalyzes the removal of the 5'-leader sequence from pre-tRNA to produce the mature 5'-terminus. It can also cleave other RNA substrates such as 4.5S RNA. The protein component plays an auxiliary but essential role in vivo by binding to the 5'-leader sequence and broadening the substrate specificity of the ribozyme. The polypeptide is Ribonuclease P protein component (Mycolicibacterium paratuberculosis (strain ATCC BAA-968 / K-10) (Mycobacterium paratuberculosis)).